A 403-amino-acid chain; its full sequence is Imidazolonepropionase (403 aa).

H69 and H71 together coordinate Fe(3+). H69 and H71 together coordinate Zn(2+). 3 residues coordinate 4-imidazolone-5-propanoate: R78, Y141, and H174. Y141 is an N-formimidoyl-L-glutamate binding site. Residue H239 coordinates Fe(3+). Residue H239 coordinates Zn(2+). Q242 serves as a coordination point for 4-imidazolone-5-propanoate. Fe(3+) is bound at residue D314. D314 contacts Zn(2+). 2 residues coordinate N-formimidoyl-L-glutamate: N316 and G318. Residue S319 participates in 4-imidazolone-5-propanoate binding.

The protein belongs to the metallo-dependent hydrolases superfamily. HutI family. The cofactor is Zn(2+). Requires Fe(3+) as cofactor.

Its subcellular location is the cytoplasm. It carries out the reaction 4-imidazolone-5-propanoate + H2O = N-formimidoyl-L-glutamate. Its pathway is amino-acid degradation; L-histidine degradation into L-glutamate; N-formimidoyl-L-glutamate from L-histidine: step 3/3. Functionally, catalyzes the hydrolytic cleavage of the carbon-nitrogen bond in imidazolone-5-propanoate to yield N-formimidoyl-L-glutamate. It is the third step in the universal histidine degradation pathway. In Legionella pneumophila (strain Corby), this protein is Imidazolonepropionase.